The primary structure comprises 1829 residues: Iron-regulated protein FrpC (1829 aa).

Hemolysin-type calcium-binding repeat units follow at residues 869–886 (FGHN…NDTL), 887–904 (IGGA…SDTY), 1015–1032 (NGGL…DDLL), 1033–1050 (NGDA…NDTL), 1051–1068 (DGGE…NDAL), 1069–1086 (NGGE…NDTL), 1087–1104 (IGGA…SDTY), 1215–1232 (NGGL…DDLL), 1233–1250 (NGDA…NDTL), 1251–1268 (DGGE…NDAL), 1269–1286 (NGGE…NDTL), 1287–1304 (IGGA…SDTY), 1415–1432 (NGGL…DDLL), 1433–1450 (NGDA…NDTL), 1451–1468 (NGGE…NDAL), 1469–1486 (NGGE…NDTL), 1487–1504 (IGGA…SDTY), 1615–1632 (NGGL…DDLL), 1633–1650 (NGDA…NDTL), 1651–1668 (DGGE…NDAL), 1669–1686 (NGGE…NDTL), and 1687–1704 (IGGA…SDTY). The tract at residues 1671–1690 (GEGNDHLNGEDGNDTLIGGA) is disordered.

This sequence belongs to the RTX prokaryotic toxin (TC 1.C.11) family.

The protein resides in the cell outer membrane. Its subcellular location is the secreted. May participate in the pathogenesis of meningococcal disease. The sequence is that of Iron-regulated protein FrpC (frpC) from Neisseria meningitidis serogroup B (strain ATCC BAA-335 / MC58).